A 152-amino-acid chain; its full sequence is Large ribosomal subunit protein bL21 (152 aa).

Positions 115–152 are disordered; it reads VTSISNGEKPKKATTSAKPNTKKPSTAVKSSKVEKTPE. A compositionally biased stretch (polar residues) spans 127-143; it reads ATTSAKPNTKKPSTAVK.

This sequence belongs to the bacterial ribosomal protein bL21 family. Part of the 50S ribosomal subunit. Contacts protein L20.

Functionally, this protein binds to 23S rRNA in the presence of protein L20. The sequence is that of Large ribosomal subunit protein bL21 from Prochlorococcus marinus (strain SARG / CCMP1375 / SS120).